The primary structure comprises 299 residues: ATP synthase gamma chain (299 aa).

This sequence belongs to the ATPase gamma chain family. In terms of assembly, F-type ATPases have 2 components, CF(1) - the catalytic core - and CF(0) - the membrane proton channel. CF(1) has five subunits: alpha(3), beta(3), gamma(1), delta(1), epsilon(1). CF(0) has three main subunits: a, b and c.

It is found in the cell membrane. Its function is as follows. Produces ATP from ADP in the presence of a proton gradient across the membrane. The gamma chain is believed to be important in regulating ATPase activity and the flow of protons through the CF(0) complex. This chain is ATP synthase gamma chain, found in Levilactobacillus brevis (strain ATCC 367 / BCRC 12310 / CIP 105137 / JCM 1170 / LMG 11437 / NCIMB 947 / NCTC 947) (Lactobacillus brevis).